A 323-amino-acid polypeptide reads, in one-letter code: DNA primase small subunit PriS (323 aa).

Residues aspartate 97, aspartate 99, and aspartate 274 contribute to the active site.

Belongs to the eukaryotic-type primase small subunit family. Heterodimer of a small subunit (PriS) and a large subunit (PriL). Mg(2+) serves as cofactor. Mn(2+) is required as a cofactor.

Functionally, catalytic subunit of DNA primase, an RNA polymerase that catalyzes the synthesis of short RNA molecules used as primers for DNA polymerase during DNA replication. The small subunit contains the primase catalytic core and has DNA synthesis activity on its own. Binding to the large subunit stabilizes and modulates the activity, increasing the rate of DNA synthesis while decreasing the length of the DNA fragments, and conferring RNA synthesis capability. The DNA polymerase activity may enable DNA primase to also catalyze primer extension after primer synthesis. May also play a role in DNA repair. The sequence is that of DNA primase small subunit PriS from Methanothermobacter thermautotrophicus (strain ATCC 29096 / DSM 1053 / JCM 10044 / NBRC 100330 / Delta H) (Methanobacterium thermoautotrophicum).